Consider the following 31-residue polypeptide: Photosystem II reaction center protein T (31 aa).

Residues 3–23 (SVAYILVLTMALSVIFFAIAF) traverse the membrane as a helical segment.

The protein belongs to the PsbT family. As to quaternary structure, PSII is composed of 1 copy each of membrane proteins PsbA, PsbB, PsbC, PsbD, PsbE, PsbF, PsbH, PsbI, PsbJ, PsbK, PsbL, PsbM, PsbT, PsbX, PsbY, PsbZ, Psb30/Ycf12, peripheral proteins PsbO, CyanoQ (PsbQ), PsbU, PsbV and a large number of cofactors. It forms dimeric complexes.

The protein localises to the cellular thylakoid membrane. Found at the monomer-monomer interface of the photosystem II (PS II) dimer, plays a role in assembly and dimerization of PSII. PSII is a light-driven water plastoquinone oxidoreductase, using light energy to abstract electrons from H(2)O, generating a proton gradient subsequently used for ATP formation. This Microcystis aeruginosa (strain NIES-843 / IAM M-2473) protein is Photosystem II reaction center protein T.